Reading from the N-terminus, the 657-residue chain is Threonine--tRNA ligase (657 aa).

The TGS domain occupies 7 to 70 (SQTQVTVTLP…SEDASIEIVT (64 aa)). The segment at 253 to 555 (DHRKLGAELE…LIEHTGGNFP (303 aa)) is catalytic. Zn(2+) is bound by residues C351, H402, and H532.

The protein belongs to the class-II aminoacyl-tRNA synthetase family. As to quaternary structure, homodimer. The cofactor is Zn(2+).

The protein localises to the cytoplasm. It carries out the reaction tRNA(Thr) + L-threonine + ATP = L-threonyl-tRNA(Thr) + AMP + diphosphate + H(+). Functionally, catalyzes the attachment of threonine to tRNA(Thr) in a two-step reaction: L-threonine is first activated by ATP to form Thr-AMP and then transferred to the acceptor end of tRNA(Thr). Also edits incorrectly charged L-seryl-tRNA(Thr). The polypeptide is Threonine--tRNA ligase (Prosthecochloris aestuarii (strain DSM 271 / SK 413)).